A 91-amino-acid chain; its full sequence is Putative methyltransferase YfdM (91 aa).

This chain is Putative methyltransferase YfdM (yfdM), found in Escherichia coli (strain K12).